Reading from the N-terminus, the 267-residue chain is Heme-containing CO-sensing transcriptional regulator RcoM 1 (267 aa).

In terms of domain architecture, PAS spans arginine 15–leucine 86. The heme site is built by histidine 74 and methionine 104. Positions isoleucine 161 to valine 266 constitute an HTH LytTR-type domain.

Heme serves as cofactor.

It localises to the cytoplasm. One-component, b-type heme-containing aerobic sensor and transcriptional regulator that responds to CO by activating the expression of the oxidation operon cox. In Paraburkholderia xenovorans (strain LB400), this protein is Heme-containing CO-sensing transcriptional regulator RcoM 1 (rcoM1).